The chain runs to 339 residues: DNA-directed RNA polymerase subunit alpha (339 aa).

Positions 1–233 are alpha N-terminal domain (alpha-NTD); that stretch reads MVREEVAGST…DLFLPFLHAE (233 aa). The interval 264-339 is alpha C-terminal domain (alpha-CTD); sequence KKGIPLNCIF…IDLLKNKLSF (76 aa).

It belongs to the RNA polymerase alpha chain family. As to quaternary structure, in plastids the minimal PEP RNA polymerase catalytic core is composed of four subunits: alpha, beta, beta', and beta''. When a (nuclear-encoded) sigma factor is associated with the core the holoenzyme is formed, which can initiate transcription.

It localises to the plastid. Its subcellular location is the chloroplast. It carries out the reaction RNA(n) + a ribonucleoside 5'-triphosphate = RNA(n+1) + diphosphate. In terms of biological role, DNA-dependent RNA polymerase catalyzes the transcription of DNA into RNA using the four ribonucleoside triphosphates as substrates. The sequence is that of DNA-directed RNA polymerase subunit alpha from Eremopyrum distans.